The primary structure comprises 204 residues: Holliday junction branch migration complex subunit RuvA (204 aa).

Residues 1–64 (MIGRLRGILL…EDAQLLYGFN (64 aa)) form a domain I region. Residues 65–143 (TVKERALFRE…GWGAGDLFTP (79 aa)) form a domain II region. Residues 144–155 (FTDAAPTDSAAA) form a flexible linker region. The domain III stretch occupies residues 156 to 204 (SSNSAEEEAVSALLALGYKPTQASKVVSQIAKPDMSSEQLIREALKSMV).

The protein belongs to the RuvA family. As to quaternary structure, homotetramer. Forms an RuvA(8)-RuvB(12)-Holliday junction (HJ) complex. HJ DNA is sandwiched between 2 RuvA tetramers; dsDNA enters through RuvA and exits via RuvB. An RuvB hexamer assembles on each DNA strand where it exits the tetramer. Each RuvB hexamer is contacted by two RuvA subunits (via domain III) on 2 adjacent RuvB subunits; this complex drives branch migration. In the full resolvosome a probable DNA-RuvA(4)-RuvB(12)-RuvC(2) complex forms which resolves the HJ.

It localises to the cytoplasm. Its function is as follows. The RuvA-RuvB-RuvC complex processes Holliday junction (HJ) DNA during genetic recombination and DNA repair, while the RuvA-RuvB complex plays an important role in the rescue of blocked DNA replication forks via replication fork reversal (RFR). RuvA specifically binds to HJ cruciform DNA, conferring on it an open structure. The RuvB hexamer acts as an ATP-dependent pump, pulling dsDNA into and through the RuvAB complex. HJ branch migration allows RuvC to scan DNA until it finds its consensus sequence, where it cleaves and resolves the cruciform DNA. In Vibrio parahaemolyticus serotype O3:K6 (strain RIMD 2210633), this protein is Holliday junction branch migration complex subunit RuvA.